A 455-amino-acid chain; its full sequence is P2X purinoceptor 5 (455 aa).

Residues 1–30 are Cytoplasmic-facing; that stretch reads MGQAAWKGFVLSLFDYKTAKFVVAKSKKVG. A helical transmembrane segment spans residues 31–50; the sequence is LLYRVLQLTILLYLLIWVFL. Over 51-339 the chain is Extracellular; that stretch reads IKKSYQDIDT…KFSIIPTVIN (289 aa). ATP is bound at residue 69–71; that stretch reads KVK. Asn-77 is a glycosylation site (N-linked (GlcNAc...) asparagine). Cystine bridges form between Cys-118-Cys-169, Cys-129-Cys-152, and Cys-135-Cys-163. The N-linked (GlcNAc...) asparagine glycan is linked to Asn-157. Position 189 (Thr-189) interacts with ATP. Asn-202 carries an N-linked (GlcNAc...) asparagine glycan. 2 disulfide bridges follow: Cys-220–Cys-229 and Cys-263–Cys-272. ATP-binding positions include 294–296 and Lys-314; that span reads NFR. The helical transmembrane segment at 340-362 threads the bilayer; sequence IGSGLALMGAGAFFCDLVLIYLI. At 363-455 the chain is on the cytoplasmic side; the sequence is RKSEFYRDKK…PSQILQTVKT (93 aa).

It belongs to the P2X receptor family. As to quaternary structure, functional P2XRs are organized as homomeric and heteromeric trimers. Homotrimer. Forms heterotrimer with P2RX1. In terms of tissue distribution, expressed in a number of tissues, with highest levels detected in heart and kidney.

Its subcellular location is the cell membrane. It catalyses the reaction Na(+)(in) = Na(+)(out). The catalysed reaction is Ca(2+)(in) = Ca(2+)(out). The enzyme catalyses chloride(in) = chloride(out). Activated by ATP. Slowly desensitizing. Not activated by ATP agonist alpha/beta-methylene-ATP. Highly sensitive to the antagonists suramin and PPADS. Functionally, ATP-gated nonselective transmembrane cation channel permeable to potassium, sodium and calcium. Unlike other P2RX receptors, the P2X5 receptor is also permeable to chloride. Acts as an important regulator of inflammatory-related bone loss and osteoclast multinucleation. The protein is P2X purinoceptor 5 of Mus musculus (Mouse).